A 581-amino-acid polypeptide reads, in one-letter code: Putative protein phosphatase 2C 22 (581 aa).

A signal peptide spans 1-21 (MVISVPLFSSVLLALVVAVPA). The region spanning 102 to 478 (KYASSAMQGL…NNATAILVQF (377 aa)) is the PPM-type phosphatase domain. Mn(2+) is bound by residues Asp138, Gly139, Asp373, and Asn469. The disordered stretch occupies residues 538–563 (SDEVAGGAAVAEQHQHNPEGGGEQQL).

The protein belongs to the PP2C family. The cofactor is Mg(2+). Mn(2+) is required as a cofactor.

It carries out the reaction O-phospho-L-seryl-[protein] + H2O = L-seryl-[protein] + phosphate. The catalysed reaction is O-phospho-L-threonyl-[protein] + H2O = L-threonyl-[protein] + phosphate. This is Putative protein phosphatase 2C 22 from Oryza sativa subsp. japonica (Rice).